A 408-amino-acid polypeptide reads, in one-letter code: Argininosuccinate synthase (408 aa).

ATP contacts are provided by residues 11–19 and A38; that span reads AYSGGLDTS. Residues Y91 and S96 each coordinate L-citrulline. G121 is an ATP binding site. L-aspartate-binding residues include T123, N127, and D128. N127 contacts L-citrulline. R131, S182, S191, E267, and Y279 together coordinate L-citrulline.

This sequence belongs to the argininosuccinate synthase family. Type 1 subfamily. Homotetramer.

The protein resides in the cytoplasm. It catalyses the reaction L-citrulline + L-aspartate + ATP = 2-(N(omega)-L-arginino)succinate + AMP + diphosphate + H(+). It participates in amino-acid biosynthesis; L-arginine biosynthesis; L-arginine from L-ornithine and carbamoyl phosphate: step 2/3. The chain is Argininosuccinate synthase from Paracoccus denitrificans (strain Pd 1222).